Here is a 215-residue protein sequence, read N- to C-terminus: UPF0502 protein PP_2442 (215 aa).

It belongs to the UPF0502 family.

The polypeptide is UPF0502 protein PP_2442 (Pseudomonas putida (strain ATCC 47054 / DSM 6125 / CFBP 8728 / NCIMB 11950 / KT2440)).